The primary structure comprises 539 residues: Cytochrome c oxidase subunit 1 homolog (539 aa).

The next 2 helical transmembrane spans lie at 28–48 (LFAA…LLLL) and 75–95 (GVMA…VVAL). His-117 provides a ligand contact to heme b. 11 helical membrane passes run 118–138 (TSAV…FYVV), 154–174 (FVFW…LLGI), 187–207 (VDLW…GTIL), 214–234 (ISVA…LHIV), 265–285 (GHNA…YYFI), 298–318 (LSII…PHHL), 330–350 (LGMV…INGL), 368–388 (MMVM…MMSI), 402–422 (IGHV…GAIY), 443–463 (HFWL…VAGI), and 498–518 (LGGL…TMTI). Cu cation is bound by residues His-266, His-316, and His-317. Heme b is bound by residues His-404 and His-406.

The protein belongs to the heme-copper respiratory oxidase family. It depends on Cu(2+) as a cofactor. Requires heme b as cofactor.

The protein resides in the cell membrane. It carries out the reaction 4 Fe(II)-[cytochrome c] + O2 + 8 H(+)(in) = 4 Fe(III)-[cytochrome c] + 2 H2O + 4 H(+)(out). It participates in energy metabolism; oxidative phosphorylation. Cytochrome c oxidase is the component of the respiratory chain that catalyzes the reduction of oxygen to water. Subunits 1-3 form the functional core of the enzyme complex. Co I is the catalytic subunit of the enzyme. Electrons originating in cytochrome c or a quinol are transferred to the bimetallic center formed by a high-spin heme and copper B. The polypeptide is Cytochrome c oxidase subunit 1 homolog (fixN) (Agrobacterium tumefaciens (strain T37)).